The primary structure comprises 321 residues: MTKYALVGDVGGTNARLALCDIASGEISQAKTYSGLDYPSLEAVVRVYLDEHSVSVEDGCIAIACPITGDWVAMTNHTWAFSIAEMKKNLGFSHLEIINDFTAVSMAIPMLKKEHLIQFGGGEPVDGKPIAVYGAGTGLGVAHLVHVDKRWISLPGEGGHVDFAPNSEEEAMILEILRAEIGHVSAERVLSGPGLVNLYRAIVKSDNRLPENLRPKDITERALADSCIDCRRALSLFCVIMGRFGGDLALTMGTFGGVYIAGGIVPRFLEFFKASGFRGGFEDKGRFKDYIHGIPVYLIVHDNPGLLGSGAHLRQTLGHIL.

8 to 13 serves as a coordination point for ATP; the sequence is GDVGGT.

Belongs to the bacterial glucokinase family.

It is found in the cytoplasm. It carries out the reaction D-glucose + ATP = D-glucose 6-phosphate + ADP + H(+). This is Glucokinase from Salmonella paratyphi B (strain ATCC BAA-1250 / SPB7).